A 238-amino-acid polypeptide reads, in one-letter code: MTAYKSGDPTTINRLYGRAKGKPLRQGQQALVDELLPQISMPAEGPITAEALFGEPRPLHFEIGFGGGEHMAFRADMLPDHGFIGAEPFLNGVAQALTHVSGDNGQHPPIPNVRIHHGDALEVLRRIPDGSLSFLYLLHPDPWPKARHAKRRMMNDGPVDLFAAKLRPGGEFRFGTDHAVYLRHALMVMRRHKHQFEWLAKDARDFQVRPGGWPETRYEHKARTVYGHEVWYFRFRRR.

The S-adenosyl-L-methionine site is built by E62, E87, D119, and D141. D141 is a catalytic residue. Residues K145, D177, and 216-219 (TRYE) each bind substrate.

Belongs to the class I-like SAM-binding methyltransferase superfamily. TrmB family.

It carries out the reaction guanosine(46) in tRNA + S-adenosyl-L-methionine = N(7)-methylguanosine(46) in tRNA + S-adenosyl-L-homocysteine. The protein operates within tRNA modification; N(7)-methylguanine-tRNA biosynthesis. Its function is as follows. Catalyzes the formation of N(7)-methylguanine at position 46 (m7G46) in tRNA. The protein is tRNA (guanine-N(7)-)-methyltransferase of Novosphingobium aromaticivorans (strain ATCC 700278 / DSM 12444 / CCUG 56034 / CIP 105152 / NBRC 16084 / F199).